The following is a 1012-amino-acid chain: DNA polymerase catalytic subunit (1012 aa).

The protein belongs to the DNA polymerase type-B family.

It localises to the host nucleus. The catalysed reaction is DNA(n) + a 2'-deoxyribonucleoside 5'-triphosphate = DNA(n+1) + diphosphate. Its function is as follows. Replicates viral genomic DNA. The chain is DNA polymerase catalytic subunit (U38) from Human herpesvirus 6B (strain Z29) (HHV-6 variant B).